Reading from the N-terminus, the 78-residue chain is Conotoxin ArMKLT2-0313 (78 aa).

The signal sequence occupies residues 1–22; sequence MKLTCVLIIAVLCLTVCQLITA. Positions 23–47 are excised as a propeptide; it reads DYLRDKQKYRSVRLRDGMLNFKGSR. Q48 carries the pyrrolidone carboxylic acid modification. 3 cysteine pairs are disulfide-bonded: C49-C62, C56-C67, and C61-C75.

This sequence belongs to the conotoxin O1 superfamily. As to expression, expressed by the venom duct.

The protein localises to the secreted. This is Conotoxin ArMKLT2-0313 from Conus arenatus (Sand-dusted cone).